We begin with the raw amino-acid sequence, 186 residues long: Elongation factor P (186 aa).

This sequence belongs to the elongation factor P family.

It localises to the cytoplasm. It functions in the pathway protein biosynthesis; polypeptide chain elongation. Involved in peptide bond synthesis. Stimulates efficient translation and peptide-bond synthesis on native or reconstituted 70S ribosomes in vitro. Probably functions indirectly by altering the affinity of the ribosome for aminoacyl-tRNA, thus increasing their reactivity as acceptors for peptidyl transferase. The protein is Elongation factor P of Enterococcus faecalis (strain ATCC 700802 / V583).